We begin with the raw amino-acid sequence, 137 residues long: Large ribosomal subunit protein uL16 (137 aa).

It belongs to the universal ribosomal protein uL16 family. As to quaternary structure, part of the 50S ribosomal subunit.

Binds 23S rRNA and is also seen to make contacts with the A and possibly P site tRNAs. The sequence is that of Large ribosomal subunit protein uL16 from Sinorhizobium medicae (strain WSM419) (Ensifer medicae).